The following is a 309-amino-acid chain: Sulfur oxygenase/reductase (309 aa).

C31 bears the Cysteine persulfide mark. Residues H86, H90, and E114 each coordinate Fe cation.

Homoicosatetramer. The resulting structure is a hollow sphere where catalysis takes place in the inside cavity. Requires Fe cation as cofactor.

It is found in the cytoplasm. It carries out the reaction 4 sulfur + O2 + 4 H2O = 2 hydrogen sulfide + 2 sulfite + 6 H(+). With respect to regulation, inhibited by zinc. Functionally, catalyzes the simultaneous oxidation and reduction of elemental sulfur in the presence of oxygen, with sulfite and hydrogen sulfide as products. This is Sulfur oxygenase/reductase (sor) from Acidianus ambivalens (Desulfurolobus ambivalens).